The sequence spans 160 residues: MRISIFAVGRLKSGPEKDLAARYIERLAKTGPAIGLEFSRVIEVGESRASNAETRKREEAAMLEKHLADGAVLVLLDERGKALDSPAFASLFGDLRDSGKRDLVIAIGGADGLDSALYDKATAVLNLGKLTWPHQIVRILIAEQLYRAVTILSGHPYHRV.

S-adenosyl-L-methionine contacts are provided by residues leucine 76, glycine 108, and 127-132 (LGKLTW).

Belongs to the RNA methyltransferase RlmH family. In terms of assembly, homodimer.

It localises to the cytoplasm. The catalysed reaction is pseudouridine(1915) in 23S rRNA + S-adenosyl-L-methionine = N(3)-methylpseudouridine(1915) in 23S rRNA + S-adenosyl-L-homocysteine + H(+). Functionally, specifically methylates the pseudouridine at position 1915 (m3Psi1915) in 23S rRNA. In Agrobacterium fabrum (strain C58 / ATCC 33970) (Agrobacterium tumefaciens (strain C58)), this protein is Ribosomal RNA large subunit methyltransferase H.